The primary structure comprises 246 residues: 1-(5-phosphoribosyl)-5-[(5-phosphoribosylamino)methylideneamino] imidazole-4-carboxamide isomerase (246 aa).

Asp8 (proton acceptor) is an active-site residue. Asp130 functions as the Proton donor in the catalytic mechanism.

Belongs to the HisA/HisF family.

Its subcellular location is the cytoplasm. The enzyme catalyses 1-(5-phospho-beta-D-ribosyl)-5-[(5-phospho-beta-D-ribosylamino)methylideneamino]imidazole-4-carboxamide = 5-[(5-phospho-1-deoxy-D-ribulos-1-ylimino)methylamino]-1-(5-phospho-beta-D-ribosyl)imidazole-4-carboxamide. The protein operates within amino-acid biosynthesis; L-histidine biosynthesis; L-histidine from 5-phospho-alpha-D-ribose 1-diphosphate: step 4/9. The sequence is that of 1-(5-phosphoribosyl)-5-[(5-phosphoribosylamino)methylideneamino] imidazole-4-carboxamide isomerase from Hydrogenovibrio crunogenus (strain DSM 25203 / XCL-2) (Thiomicrospira crunogena).